The chain runs to 286 residues: Short-chain dehydrogenase fogD (286 aa).

The NADP(+) site is built by valine 8, threonine 34, aspartate 55, tyrosine 147, lysine 151, valine 180, and threonine 182. Tyrosine 147 (proton acceptor) is an active-site residue. Lysine 151 serves as the catalytic Lowers pKa of active site Tyr.

This sequence belongs to the short-chain dehydrogenases/reductases (SDR) family.

It functions in the pathway secondary metabolite biosynthesis. Its function is as follows. Short-chain dehydrogenase; part of the gene cluster that mediates the biosynthesis of flavoglaucin and congeners (including aspergin, dihydroauroglaucin and auroglaucin), prenylated salicylaldehyde derivatives carrying a saturated or an unsaturated C-7 side chain. The PKS fogA releases the carboxylic acid (8E,10E,12E)-3,5,7-trihydroxytetradeca-8,10,12-trienoic acid as its product, as well as derivatives with one and two double bonds. FogA is indeed able to reduce the initial triketide, thus being at least partially responsible for the differently saturated heptyl side chains of flavoglaucin congeners. The oxidoreductases fogB, fogC and fogD modify the nascent polyketide in fogA-bound form and, together, fogA, fogB, fogC and fogD are necessary for the formation of the aromatic core and the cyclized PKS products are released as salicyl alcohols. In particular, fogB is responsible for oxidation of a hydroxyl group or reduction of remaining double bond(s) at the C-7 residue whereas fogD is probably involved in the reductive release of the modified PKS products. The cytochrome P450 monooxygenase fogE is then responsible for the hydroxylation at C-3 of the benzene ring. The fogE products are substrates of the prenyltransferase fogH and the prenylated benzyl alcohols are subsequently oxidized by the fogF to produce the final aryl aldehydes flavoglaucin and congeners. The short-chain dehydrogenase fogG does not seem to be involved in the biosynthesis of the prenylated salicylaldehyde derivatives. The sequence is that of Short-chain dehydrogenase fogD from Aspergillus ruber (strain CBS 135680).